The primary structure comprises 542 residues: MDDKIALTSNDGERPRMKKDWRFWTIFAALMLIAFLAALDMTMISTALPAIVAALPPSSIAANWITSAFLLPMVASQPIFGGLSCSLGRKNSVISALVIFLVGSIVCATAKSVLVLVVGRGVQGLGGGGIHALSEIIMSDLTTLRERGVYFGLIALVFAVAGFIAPVLGGVFSHSSWPWIFWINLPIGAVALVLLVLFLNIRVPLLTGRQKWEKLDLVGNAILFGSVTAVLIAVTEGGIKYRWSDARVWVPLVVGLIGLVAFLMVEWIPGPLCRQPVFPRDLFANRTAAVAYLQTFLHGVIFYGIIYMVPIYFQAIKDRTPLQSAIWSFPLTAPSTPLALIAGLLISISGRYKKLIFIGWALMAGGVGWLTHWSVGTSKAEWAISQIIAGAGIGIMFPITLPPIQASLPVERLEAATAAYAFSRTFGAVWGITGATTIFATQAAKKLRPDYGQLEPLGLNDFTVIAFAESLRYLPEQLQVLVKKVYADAISDSFWLFVPLAIIGFASTFLLKDLPLPDFIKSQAVLEEKGASENASPPESLA.

8 helical membrane-spanning segments follow: residues 24–44 (WTIF…MTMI), 51–71 (IVAA…AFLL), 98–118 (VIFL…VLVV), 124–144 (GLGG…LTTL), 151–171 (FGLI…LGGV), 179–199 (WIFW…VLFL), 215–235 (LDLV…IAVT), and 248–268 (VWVP…VEWI). A glycan (N-linked (GlcNAc...) asparagine) is linked at asparagine 285. Helical transmembrane passes span 296–316 (FLHG…FQAI), 326–346 (IWSF…GLLI), 355–375 (LIFI…HWSV), 384–404 (ISQI…LPPI), 419–439 (AYAF…TTIF), and 490–510 (ISDS…STFL).

The protein belongs to the major facilitator superfamily.

Its subcellular location is the cell membrane. Functionally, glycosyltransferase; part of the gene cluster that mediates the biosynthesis of mannosylerythritol lipids (MELs), surface-active substances that enhance the availability of water-insoluble substrates. MMF1 is directly involved in the secretiopn of MALs. In Pseudozyma antarctica (strain T-34) (Yeast), this protein is MFS-type efflux pump MMF1.